A 732-amino-acid chain; its full sequence is MKFDKPAGENPIDQLKVVGRPHDRIDGPLKTTGTARYAYEWHEEAPNAAYGYIVGSAIAKGRLTALDTDAAQKAPGVLAVITASNAGALGKGDKNTARLLGGPTIEHYHQAIALVVAETFEQARAAASLVQAHYRRNKGAYSLADEKQAVNQPPEDTPDKNVGDFDGAFTSAAVKIDATYTTPDQSHMAMEPHASMAVWDGNKLTLWTSNQMIDWCRTDLAKTLKVPVENVRIISPYIGGGFGGKLFLRSDALLAALAARAVKRPVKVMLPRPSIPNNTTHRPATLQHLRIGADQSGKITAISHESWSGNLPGGTPETAVQQSELLYAGANRHTGLRLATLDLPEGNAMRAPGEAPGLMALEIAIDELAEKAGIDPVEFRILNDTQVDPADPTRCFSRRQLIECLRTGADKFGWKQRNATPGQVRDGEWLVGHGVAAGFRNNLLEKSGARVHLEQNGTVTVETDMTDIGTGSYTILAQTAAEMLGVPLEQVAVHLGDSSFPVSAGSGGQWGANTSTSGVYAACMKLREMIASAVGFDPEQSQFADGKITNGTRSATLHEATAGGRLTAEESIEFGTLSKEYQQSTFAGHFVEVGVHSATGEVRVRRMLAVCAAGRILNPKTARSQVIGAMTMGMGAALMEELAVDDRLGYFVNHDMAGYEVPVHADIPKQEVIFLDDTDPISSPMKAKGVGELGLCGVSAAIANAVYNATGIRVRDYPITLDKLLDKLPDVV.

Residues 241–242 (GF), 468–470 (IGT), 511–512 (GA), 615–621 (RILNPKT), Gln-625, and 688–691 (KGVG) contribute to the Mo-molybdopterin cytosine dinucleotide site. The Proton acceptor role is filled by Glu-692.

The protein belongs to the xanthine dehydrogenase family. Heterotrimer composed of PaoA, PaoB and PaoC. Mo-molybdopterin cytosine dinucleotide is required as a cofactor.

The protein resides in the periplasm. It carries out the reaction an aldehyde + A + H2O = a carboxylate + AH2 + H(+). Its activity is regulated as follows. The complex requires PaoD for activity. Its function is as follows. Oxidizes aldehydes to the corresponding carboxylic acids with a preference for aromatic aldehydes. It might play a role in the detoxification of aldehydes to avoid cell damage. This chain is Aldehyde oxidoreductase molybdenum-binding subunit PaoC, found in Escherichia coli (strain K12).